Reading from the N-terminus, the 147-residue chain is Large ribosomal subunit protein uL13 (147 aa).

Belongs to the universal ribosomal protein uL13 family. Part of the 50S ribosomal subunit.

Its function is as follows. This protein is one of the early assembly proteins of the 50S ribosomal subunit, although it is not seen to bind rRNA by itself. It is important during the early stages of 50S assembly. This chain is Large ribosomal subunit protein uL13, found in Lactobacillus delbrueckii subsp. bulgaricus (strain ATCC 11842 / DSM 20081 / BCRC 10696 / JCM 1002 / NBRC 13953 / NCIMB 11778 / NCTC 12712 / WDCM 00102 / Lb 14).